We begin with the raw amino-acid sequence, 374 residues long: Glutamate 5-kinase (374 aa).

Lysine 9 provides a ligand contact to ATP. Substrate contacts are provided by serine 49, aspartate 136, and asparagine 148. ATP is bound by residues 168–169 and 210–216; these read TD and TGGMKSK. The PUA domain occupies 276 to 354; it reads SGVVRIDQGA…DEAKQLIPLV (79 aa).

The protein belongs to the glutamate 5-kinase family.

The protein localises to the cytoplasm. It carries out the reaction L-glutamate + ATP = L-glutamyl 5-phosphate + ADP. It participates in amino-acid biosynthesis; L-proline biosynthesis; L-glutamate 5-semialdehyde from L-glutamate: step 1/2. Its function is as follows. Catalyzes the transfer of a phosphate group to glutamate to form L-glutamate 5-phosphate. The protein is Glutamate 5-kinase of Halalkalibacterium halodurans (strain ATCC BAA-125 / DSM 18197 / FERM 7344 / JCM 9153 / C-125) (Bacillus halodurans).